Consider the following 118-residue polypeptide: Cysteine-rich and transmembrane domain-containing protein 1 (118 aa).

2 stretches are compositionally biased toward low complexity: residues 1 to 54 (MNYE…QGYP) and 64 to 74 (YTAQPGYQGYP). The disordered stretch occupies residues 1 to 82 (MNYEQPPAYT…YPQPGPPTNT (82 aa)). Residues 95-112 (SGEQACLATCWAALCCCC) form a helical membrane-spanning segment.

Belongs to the CYSTM1 family.

The protein localises to the membrane. This chain is Cysteine-rich and transmembrane domain-containing protein 1 (cystm1), found in Danio rerio (Zebrafish).